Here is a 223-residue protein sequence, read N- to C-terminus: Mating-type protein ALPHA2 (223 aa).

Residues 151–213 (EFKKGKRFLK…NRRRKDKITE (63 aa)) constitute a DNA-binding region (homeobox; TALE-type).

The protein belongs to the TALE/M-ATYP homeobox family. In terms of assembly, forms a heterodimer with A1.

The protein localises to the nucleus. Mating type proteins are sequence specific DNA-binding proteins that act as master switches in yeast differentiation by controlling gene expression in a cell type-specific fashion. Transcriptional corepressor that acts in conjunction with A1 to repress transcription of haploid-specific genes. The sequence is that of Mating-type protein ALPHA2 (HMLALPHA2) from Kluyveromyces lactis (strain ATCC 8585 / CBS 2359 / DSM 70799 / NBRC 1267 / NRRL Y-1140 / WM37) (Yeast).